Consider the following 231-residue polypeptide: 5'-methylthioadenosine/S-adenosylhomocysteine nucleosidase (231 aa).

The active-site Proton acceptor is the Glu12. Residues Gly78, Met153, and 174 to 175 (ME) each bind substrate. The active-site Proton donor is Asp198.

It belongs to the PNP/UDP phosphorylase family. MtnN subfamily.

The catalysed reaction is S-adenosyl-L-homocysteine + H2O = S-(5-deoxy-D-ribos-5-yl)-L-homocysteine + adenine. The enzyme catalyses S-methyl-5'-thioadenosine + H2O = 5-(methylsulfanyl)-D-ribose + adenine. It carries out the reaction 5'-deoxyadenosine + H2O = 5-deoxy-D-ribose + adenine. Its pathway is amino-acid biosynthesis; L-methionine biosynthesis via salvage pathway; S-methyl-5-thio-alpha-D-ribose 1-phosphate from S-methyl-5'-thioadenosine (hydrolase route): step 1/2. Catalyzes the irreversible cleavage of the glycosidic bond in both 5'-methylthioadenosine (MTA) and S-adenosylhomocysteine (SAH/AdoHcy) to adenine and the corresponding thioribose, 5'-methylthioribose and S-ribosylhomocysteine, respectively. Also cleaves 5'-deoxyadenosine, a toxic by-product of radical S-adenosylmethionine (SAM) enzymes, into 5-deoxyribose and adenine. This chain is 5'-methylthioadenosine/S-adenosylhomocysteine nucleosidase, found in Bacillus cereus (strain B4264).